Reading from the N-terminus, the 212-residue chain is uncharacterized protein (212 aa).

This is an uncharacterized protein from Saccharolobus islandicus (Sulfolobus islandicus).